Reading from the N-terminus, the 568-residue chain is Protein yellow (568 aa).

The signal sequence occupies residues 1 to 28 (MHAQDKGGVLPGLSLLLIAVAMVCPSQA). 2 N-linked (GlcNAc...) asparagine glycosylation sites follow: Asn151 and Asn222.

This sequence belongs to the major royal jelly protein family.

Its subcellular location is the secreted. Controls the pigmentation pattern of the adult cuticle and larval mouth parts. This chain is Protein yellow (y), found in Drosophila guanche (Fruit fly).